A 367-amino-acid polypeptide reads, in one-letter code: Eukaryotic translation initiation factor 3 subunit H (367 aa).

The MPN domain maps to V14 to F166.

Belongs to the eIF-3 subunit H family. In terms of assembly, component of the eukaryotic translation initiation factor 3 (eIF-3) complex.

The protein resides in the cytoplasm. Component of the eukaryotic translation initiation factor 3 (eIF-3) complex, which is involved in protein synthesis of a specialized repertoire of mRNAs and, together with other initiation factors, stimulates binding of mRNA and methionyl-tRNAi to the 40S ribosome. The eIF-3 complex specifically targets and initiates translation of a subset of mRNAs involved in cell proliferation. This chain is Eukaryotic translation initiation factor 3 subunit H, found in Botryotinia fuckeliana (strain B05.10) (Noble rot fungus).